Consider the following 159-residue polypeptide: ATP synthase subunit b 2 (159 aa).

Residues 1–21 (MDATFWAFIALVIFVAIVVYM) traverse the membrane as a helical segment.

The protein belongs to the ATPase B chain family. F-type ATPases have 2 components, F(1) - the catalytic core - and F(0) - the membrane proton channel. F(1) has five subunits: alpha(3), beta(3), gamma(1), delta(1), epsilon(1). F(0) has three main subunits: a(1), b(2) and c(10-14). The alpha and beta chains form an alternating ring which encloses part of the gamma chain. F(1) is attached to F(0) by a central stalk formed by the gamma and epsilon chains, while a peripheral stalk is formed by the delta and b chains.

The protein localises to the cell inner membrane. In terms of biological role, f(1)F(0) ATP synthase produces ATP from ADP in the presence of a proton or sodium gradient. F-type ATPases consist of two structural domains, F(1) containing the extramembraneous catalytic core and F(0) containing the membrane proton channel, linked together by a central stalk and a peripheral stalk. During catalysis, ATP synthesis in the catalytic domain of F(1) is coupled via a rotary mechanism of the central stalk subunits to proton translocation. Its function is as follows. Component of the F(0) channel, it forms part of the peripheral stalk, linking F(1) to F(0). The sequence is that of ATP synthase subunit b 2 from Brucella suis (strain ATCC 23445 / NCTC 10510).